Consider the following 334-residue polypeptide: Replication factor C subunit 4 (334 aa).

55-62 is a binding site for ATP; sequence GPPGTGKT.

The protein belongs to the activator 1 small subunits family. Heteropentamer of various rfc subunits that forms a complex (RFC) with PCNA in the presence of ATP.

It is found in the nucleus. Its function is as follows. The elongation of primed DNA templates by DNA polymerase delta and epsilon requires the action of the accessory proteins PCNA and activator 1. This subunit may be involved in the elongation of the multiprimed DNA template. This Caenorhabditis elegans protein is Replication factor C subunit 4 (rfc-4).